Consider the following 58-residue polypeptide: MLRDIAFEFFIMIALGIFIGYIIAEYTDNNLWIVVFLLLGIFCAFGRLFKMIKDYEKR.

2 helical membrane passes run 5-25 (IAFEFFIMIALGIFIGYIIAE) and 32-52 (WIVVFLLLGIFCAFGRLFKMI).

The protein localises to the cell membrane. This is an uncharacterized protein from Methanocaldococcus jannaschii (strain ATCC 43067 / DSM 2661 / JAL-1 / JCM 10045 / NBRC 100440) (Methanococcus jannaschii).